Reading from the N-terminus, the 572-residue chain is Arginine--tRNA ligase (572 aa).

Residues 122-132 carry the 'HIGH' region motif; it reads PNLAKEMHVGH.

The protein belongs to the class-I aminoacyl-tRNA synthetase family. As to quaternary structure, monomer.

It localises to the cytoplasm. It catalyses the reaction tRNA(Arg) + L-arginine + ATP = L-arginyl-tRNA(Arg) + AMP + diphosphate. The protein is Arginine--tRNA ligase of Neisseria gonorrhoeae (strain NCCP11945).